Consider the following 263-residue polypeptide: MGNKNVIQKMREKTPLIHCITNYVTINDCANILLAFGASPAMCEAYDEAYDFVSISSALYINLGTLTKEQETAAILASISAKNHNVPVVIDPVGCPAIKRKVEVINRIAEVGRIDIIKGNIGEIKFLAGMDSETRGVDSLDNGENALDACTQLAKKYNCIVAATGKKDFVSDGKRGSVIKNGTEMLTKVTGAGCMLGALCAATCASFEDKLVSTTAAILSMNIAGEKAYEKAQLPGSFRIALIDNIYMISDEEIWERGNVEWK.

Methionine 42 contributes to the substrate binding site. The ATP site is built by lysine 118 and threonine 164. Glycine 191 is a substrate binding site.

Belongs to the Thz kinase family. Requires Mg(2+) as cofactor.

It carries out the reaction 5-(2-hydroxyethyl)-4-methylthiazole + ATP = 4-methyl-5-(2-phosphooxyethyl)-thiazole + ADP + H(+). It functions in the pathway cofactor biosynthesis; thiamine diphosphate biosynthesis; 4-methyl-5-(2-phosphoethyl)-thiazole from 5-(2-hydroxyethyl)-4-methylthiazole: step 1/1. Catalyzes the phosphorylation of the hydroxyl group of 4-methyl-5-beta-hydroxyethylthiazole (THZ). This chain is Hydroxyethylthiazole kinase 2, found in Clostridium botulinum (strain Loch Maree / Type A3).